A 235-amino-acid chain; its full sequence is Putative N-acetylmannosamine-6-phosphate 2-epimerase (235 aa).

This sequence belongs to the NanE family.

The catalysed reaction is an N-acyl-D-glucosamine 6-phosphate = an N-acyl-D-mannosamine 6-phosphate. Its pathway is amino-sugar metabolism; N-acetylneuraminate degradation; D-fructose 6-phosphate from N-acetylneuraminate: step 3/5. Functionally, converts N-acetylmannosamine-6-phosphate (ManNAc-6-P) to N-acetylglucosamine-6-phosphate (GlcNAc-6-P). This Aliivibrio fischeri (strain ATCC 700601 / ES114) (Vibrio fischeri) protein is Putative N-acetylmannosamine-6-phosphate 2-epimerase.